The primary structure comprises 122 residues: Acidic phospholipase A2 (122 aa).

Cystine bridges form between Cys-26-Cys-115, Cys-28-Cys-44, Cys-43-Cys-95, Cys-49-Cys-122, Cys-50-Cys-88, Cys-57-Cys-81, and Cys-75-Cys-86. Ca(2+) contacts are provided by Tyr-27, Gly-29, and Gly-31. His-47 is a catalytic residue. Asp-48 contributes to the Ca(2+) binding site. Asp-89 is an active-site residue.

Ca(2+) is required as a cofactor. In terms of tissue distribution, expressed by the venom gland.

The protein localises to the secreted. The catalysed reaction is a 1,2-diacyl-sn-glycero-3-phosphocholine + H2O = a 1-acyl-sn-glycero-3-phosphocholine + a fatty acid + H(+). PLA2 catalyzes the calcium-dependent hydrolysis of the 2-acyl groups in 3-sn-phosphoglycerides. This is Acidic phospholipase A2 from Lachesis stenophrys (Central American bushmaster).